We begin with the raw amino-acid sequence, 670 residues long: Zinc finger protein 526 (670 aa).

3 consecutive C2H2-type zinc fingers follow at residues 57-79 (FMCS…QEQH), 108-130 (FQCG…QDAH), and 140-163 (YQCW…KAQH). 2 disordered regions span residues 168-196 (VAEP…KMEP) and 217-304 (GTHF…ATHP). Residues 171 to 189 (PPVPPPLPPPTPLPPPSPP) show a composition bias toward pro residues. Residues 197–219 (YECPECSTLCATPEEFLEHQGTH) form a C2H2-type 4 zinc finger. A compositionally biased stretch (basic and acidic residues) spans 217–231 (GTHFDSLEKEERNGL). Residues 232 to 263 (EEEEEDDEEDEEDDEEMEDEEAMAEVGDDAVG) are compositionally biased toward acidic residues. 9 C2H2-type zinc fingers span residues 305-327 (FHCS…GRAH), 332-354 (HECT…LRLH), 360-382 (YLCV…RRAH), 388-409 (HRCR…RRTH), 442-465 (LPCP…RAVH), 472-494 (HRCG…LRTH), 500-522 (FQCH…QLTH), 528-550 (YQCL…RRLH), and 573-595 (YYCG…QRVH). The tract at residues 409–443 (HAGKSGAPPTGATAPPAPAEPTPPPPPPAPPAQLP) is disordered. Over residues 423–442 (PPAPAEPTPPPPPPAPPAQL) the composition is skewed to pro residues. Residues 601–621 (LTLQPPRSPSPAPPPPPEPQQ) form a disordered region. Residues 606 to 619 (PRSPSPAPPPPPEP) show a composition bias toward pro residues.

This sequence belongs to the krueppel C2H2-type zinc-finger protein family. Widely expressed.

The protein localises to the nucleus. In terms of biological role, may be involved in transcriptional regulation. The chain is Zinc finger protein 526 (ZNF526) from Homo sapiens (Human).